Consider the following 196-residue polypeptide: HTH-type transcriptional regulator EcpR (196 aa).

The region spanning 138-196 is the HTH luxR-type domain; it reads KDIKKDKITDREMEIIRMTAQGMLPKSIARIENCSVKTVYTHRRNAEAKLYSKIYKLVP. The H-T-H motif DNA-binding region spans 162 to 181; sequence PKSIARIENCSVKTVYTHRR.

This sequence belongs to the EcpR/MatA family.

It is found in the cytoplasm. In terms of biological role, part of the ecpRABCDE operon, which encodes the E.coli common pilus (ECP). ECP is found in both commensal and pathogenic strains and plays a dual role in early-stage biofilm development and host cell recognition. Positively regulates the expression of the ecp operon. The sequence is that of HTH-type transcriptional regulator EcpR (ecpR) from Escherichia coli O17:K52:H18 (strain UMN026 / ExPEC).